The chain runs to 108 residues: Large ribosomal subunit protein uL24 (108 aa).

This sequence belongs to the universal ribosomal protein uL24 family. As to quaternary structure, part of the 50S ribosomal subunit.

Functionally, one of two assembly initiator proteins, it binds directly to the 5'-end of the 23S rRNA, where it nucleates assembly of the 50S subunit. In terms of biological role, one of the proteins that surrounds the polypeptide exit tunnel on the outside of the subunit. The polypeptide is Large ribosomal subunit protein uL24 (Geobacter sulfurreducens (strain ATCC 51573 / DSM 12127 / PCA)).